The following is a 918-amino-acid chain: Isoleucine--tRNA ligase 1 (918 aa).

Positions 57–67 match the 'HIGH' region motif; it reads PYANGDIHIGH. Glu553 is an L-isoleucyl-5'-AMP binding site. Residues 594 to 598 carry the 'KMSKS' region motif; the sequence is KMSKS. Lys597 provides a ligand contact to ATP. Residues Cys885, Cys888, Cys905, and Cys908 each coordinate Zn(2+).

Belongs to the class-I aminoacyl-tRNA synthetase family. IleS type 1 subfamily. Monomer. Zn(2+) serves as cofactor.

Its subcellular location is the cytoplasm. The catalysed reaction is tRNA(Ile) + L-isoleucine + ATP = L-isoleucyl-tRNA(Ile) + AMP + diphosphate. Functionally, catalyzes the attachment of isoleucine to tRNA(Ile). As IleRS can inadvertently accommodate and process structurally similar amino acids such as valine, to avoid such errors it has two additional distinct tRNA(Ile)-dependent editing activities. One activity is designated as 'pretransfer' editing and involves the hydrolysis of activated Val-AMP. The other activity is designated 'posttransfer' editing and involves deacylation of mischarged Val-tRNA(Ile). This chain is Isoleucine--tRNA ligase 1, found in Oceanobacillus iheyensis (strain DSM 14371 / CIP 107618 / JCM 11309 / KCTC 3954 / HTE831).